Reading from the N-terminus, the 199-residue chain is Small ribosomal subunit protein eS1 (199 aa).

It belongs to the eukaryotic ribosomal protein eS1 family.

The polypeptide is Small ribosomal subunit protein eS1 (Pyrococcus horikoshii (strain ATCC 700860 / DSM 12428 / JCM 9974 / NBRC 100139 / OT-3)).